The sequence spans 215 residues: Histidine biosynthesis bifunctional protein HisIE (215 aa).

The segment at 1–118 is phosphoribosyl-AMP cyclohydrolase; it reads MTKSISIEHL…YKNDVALLQI (118 aa). The segment at 119–215 is phosphoribosyl-ATP pyrophosphohydrolase; it reads IPQVSAKIKE…HVEKEGQQRE (97 aa).

In the N-terminal section; belongs to the PRA-CH family. This sequence in the C-terminal section; belongs to the PRA-PH family.

It is found in the cytoplasm. It catalyses the reaction 1-(5-phospho-beta-D-ribosyl)-ATP + H2O = 1-(5-phospho-beta-D-ribosyl)-5'-AMP + diphosphate + H(+). The catalysed reaction is 1-(5-phospho-beta-D-ribosyl)-5'-AMP + H2O = 1-(5-phospho-beta-D-ribosyl)-5-[(5-phospho-beta-D-ribosylamino)methylideneamino]imidazole-4-carboxamide. It functions in the pathway amino-acid biosynthesis; L-histidine biosynthesis; L-histidine from 5-phospho-alpha-D-ribose 1-diphosphate: step 2/9. Its pathway is amino-acid biosynthesis; L-histidine biosynthesis; L-histidine from 5-phospho-alpha-D-ribose 1-diphosphate: step 3/9. This is Histidine biosynthesis bifunctional protein HisIE from Oceanobacillus iheyensis (strain DSM 14371 / CIP 107618 / JCM 11309 / KCTC 3954 / HTE831).